The chain runs to 430 residues: Acylsugar acyltransferase 3 (430 aa).

Residues H155 and D367 each act as proton acceptor in the active site.

Belongs to the plant acyltransferase family. As to quaternary structure, monomer. As to expression, expressed in tip cells of type I trichomes of stems and petioles, sites of acylsugars production.

Functionally, catalyzes the transfer of short (four to five carbons) branched acyl chains to the furanose ring of di-acylsucrose acceptors to produce tri-acylsucroses such as S3:15 (5,5,5), S4:17 (2,5,5,5) and S4:24 (2,5,5,12) acylsucroses. The chain is Acylsugar acyltransferase 3 from Solanum lycopersicum (Tomato).